Consider the following 159-residue polypeptide: Carbohydrate sulfotransferase 15 (159 aa).

At 1 to 159 the chain is on the lumenal side; that stretch reads SGTTDFYRRI…YQPHNERLVK (159 aa). Residues asparagine 42 and asparagine 112 are each glycosylated (N-linked (GlcNAc...) asparagine).

Belongs to the sulfotransferase 1 family. Requires a divalent metal cation as cofactor. It depends on glutathione as a cofactor.

The protein localises to the golgi apparatus membrane. It carries out the reaction dermatan 4'-sulfate + n 3'-phosphoadenylyl sulfate = dermatan 4',6'-bissulfate + n adenosine 3',5'-bisphosphate + n H(+). It catalyses the reaction chondroitin 4'-sulfate + n 3'-phosphoadenylyl sulfate = chondroitin 4',6'-bissulfate + n adenosine 3',5'-bisphosphate + n H(+). In terms of biological role, sulfotransferase that transfers sulfate from 3'-phosphoadenosine 5'-phosphosulfate (PAPS) to the C-6 hydroxyl group of the GalNAc 4-sulfate residue of chondroitin sulfate A and forms chondroitin sulfate E containing GlcA-GalNAc(4,6-SO(4)) repeating units. The sequence is that of Carbohydrate sulfotransferase 15 (GALNAC4S6ST) from Nototodarus sloanii (Wellington flying squid).